A 48-amino-acid chain; its full sequence is Toxin CSTX-14 (48 aa).

Intrachain disulfides connect Cys3–Cys18, Cys10–Cys27, Cys17–Cys42, and Cys29–Cys40.

This sequence belongs to the neurotoxin 19 (CSTX) family. 12 subfamily. In terms of assembly, heterodimer of A and B chains; disulfide-linked. In terms of processing, contains 4 disulfide bonds. Expressed by the venom gland.

It localises to the secreted. This is Toxin CSTX-14 from Cupiennius salei (American wandering spider).